The primary structure comprises 85 residues: Conotoxin Lt28.5 (85 aa).

Residues Met1–Ala21 form the signal peptide. A propeptide spanning residues Val22 to Lys40 is cleaved from the precursor.

Belongs to the conotoxin D superfamily. In terms of processing, contains 5 disulfide bonds. In terms of tissue distribution, expressed by the venom duct.

It localises to the secreted. In terms of biological role, probable neurotoxin. The protein is Conotoxin Lt28.5 of Conus litteratus (Lettered cone).